The following is a 330-amino-acid chain: Beta-ketoacyl-[acyl-carrier-protein] synthase III (330 aa).

Residues cysteine 111 and histidine 249 contribute to the active site. The tract at residues 250-254 is ACP-binding; that stretch reads QANTR. Asparagine 279 is an active-site residue.

It belongs to the thiolase-like superfamily. FabH family. In terms of assembly, homodimer.

It localises to the cytoplasm. The catalysed reaction is malonyl-[ACP] + acetyl-CoA + H(+) = 3-oxobutanoyl-[ACP] + CO2 + CoA. It participates in lipid metabolism; fatty acid biosynthesis. Its function is as follows. Catalyzes the condensation reaction of fatty acid synthesis by the addition to an acyl acceptor of two carbons from malonyl-ACP. Catalyzes the first condensation reaction which initiates fatty acid synthesis and may therefore play a role in governing the total rate of fatty acid production. Possesses both acetoacetyl-ACP synthase and acetyl transacylase activities. Its substrate specificity determines the biosynthesis of branched-chain and/or straight-chain of fatty acids. The sequence is that of Beta-ketoacyl-[acyl-carrier-protein] synthase III from Pseudomonas aeruginosa (strain LESB58).